Here is a 512-residue protein sequence, read N- to C-terminus: tRNA-guanine(15) transglycosylase (512 aa).

Aspartate 85 serves as the catalytic Nucleophile. Aspartate 120 is a binding site for substrate. Zn(2+) is bound by residues cysteine 272, cysteine 274, and cysteine 277.

Belongs to the archaeosine tRNA-ribosyltransferase family. Zn(2+) serves as cofactor.

It catalyses the reaction guanosine(15) in tRNA + 7-cyano-7-deazaguanine = 7-cyano-7-carbaguanosine(15) in tRNA + guanine. The protein operates within tRNA modification; archaeosine-tRNA biosynthesis. Functionally, exchanges the guanine residue with 7-cyano-7-deazaguanine (preQ0) at position 15 in the dihydrouridine loop (D-loop) of archaeal tRNAs. This is tRNA-guanine(15) transglycosylase from Aeropyrum pernix (strain ATCC 700893 / DSM 11879 / JCM 9820 / NBRC 100138 / K1).